Consider the following 320-residue polypeptide: Aspartate carbamoyltransferase catalytic subunit (320 aa).

Carbamoyl phosphate is bound by residues R70 and T71. K98 is a binding site for L-aspartate. Carbamoyl phosphate contacts are provided by R120, H150, and Q153. Residues R184 and R239 each coordinate L-aspartate. The carbamoyl phosphate site is built by G280 and P281.

The protein belongs to the aspartate/ornithine carbamoyltransferase superfamily. ATCase family. Heterododecamer (2C3:3R2) of six catalytic PyrB chains organized as two trimers (C3), and six regulatory PyrI chains organized as three dimers (R2).

The catalysed reaction is carbamoyl phosphate + L-aspartate = N-carbamoyl-L-aspartate + phosphate + H(+). It participates in pyrimidine metabolism; UMP biosynthesis via de novo pathway; (S)-dihydroorotate from bicarbonate: step 2/3. Catalyzes the condensation of carbamoyl phosphate and aspartate to form carbamoyl aspartate and inorganic phosphate, the committed step in the de novo pyrimidine nucleotide biosynthesis pathway. This Xylella fastidiosa (strain Temecula1 / ATCC 700964) protein is Aspartate carbamoyltransferase catalytic subunit.